We begin with the raw amino-acid sequence, 183 residues long: Protein jagunal homolog 1 (183 aa).

Over 1-39 (MASRAGPRAAGTDGSDFQHRERVAMHYQMSVTLKYEIKK) the chain is Cytoplasmic. S3 bears the Phosphoserine mark. A helical membrane pass occupies residues 40–60 (LIYVHLVIWLLLVAKMSVGHL). Over 61-71 (RLLSHDQVAMP) the chain is Lumenal. Residues 72 to 92 (YQWEYPYLLSILPSLLGLLSF) traverse the membrane as a helical segment. The Cytoplasmic portion of the chain corresponds to 93–96 (PRNN). The chain crosses the membrane as a helical span at residues 97–117 (ISYLVLSMISMGLFSIAPLIY). Topologically, residues 118 to 137 (GSMEMFPAAQQLYRHGKAYR) are lumenal. The chain crosses the membrane as a helical span at residues 138–158 (FLFGFSAVSIMYLVLVLAVQV). The Cytoplasmic portion of the chain corresponds to 159–183 (HAWQLYYSKKLLDSWFTSTQEKKHK).

It belongs to the jagunal family. In terms of assembly, interacts with COPA, COPB2 and COPG2. In terms of tissue distribution, ubiquitously expressed.

Its subcellular location is the endoplasmic reticulum membrane. Its function is as follows. Endoplasmic reticulum transmembrane protein involved in vesicle-mediated transport, which is required for neutrophil function. Required for vesicle-mediated transport; it is however unclear whether it is involved in early secretory pathway or intracellular protein transport. Acts as a regulator of neutrophil function, probably via its role in vesicle-mediated transport: required for defense against fungal pathogens and for granulocyte colony-stimulating factor (GM-CSF) signaling pathway; possibly by regulating glycosylation and/or targeting of proteins contributing to the viability and migration of neutrophils. The chain is Protein jagunal homolog 1 from Homo sapiens (Human).